A 349-amino-acid chain; its full sequence is NADH-quinone oxidoreductase subunit H (349 aa).

Transmembrane regions (helical) follow at residues 16–36, 88–108, 123–143, 157–177, 202–222, 264–284, 285–305, and 325–345; these read WPVV…MGCV, GLFI…WAVV, LLFL…AGWA, AAQM…VLLI, FLSW…ISGI, ILVS…PVGF, LPDG…IFLW, and VFIP…MSPL.

Belongs to the complex I subunit 1 family. In terms of assembly, NDH-1 is composed of 14 different subunits. Subunits NuoA, H, J, K, L, M, N constitute the membrane sector of the complex.

The protein resides in the cell inner membrane. The catalysed reaction is a quinone + NADH + 5 H(+)(in) = a quinol + NAD(+) + 4 H(+)(out). NDH-1 shuttles electrons from NADH, via FMN and iron-sulfur (Fe-S) centers, to quinones in the respiratory chain. The immediate electron acceptor for the enzyme in this species is believed to be ubiquinone. Couples the redox reaction to proton translocation (for every two electrons transferred, four hydrogen ions are translocated across the cytoplasmic membrane), and thus conserves the redox energy in a proton gradient. This subunit may bind ubiquinone. This Azoarcus sp. (strain BH72) protein is NADH-quinone oxidoreductase subunit H.